Reading from the N-terminus, the 98-residue chain is UPF0235 protein Pmen_4153 (98 aa).

The protein belongs to the UPF0235 family.

The chain is UPF0235 protein Pmen_4153 from Ectopseudomonas mendocina (strain ymp) (Pseudomonas mendocina).